A 661-amino-acid chain; its full sequence is MTETVLNQGYGYGIVIGLGFAFAIVMILVTYVLKRYVGEVQDSEHFTTASRSVKTGLISSAVVSSWTWPGTLLTSAGMAYEYGVCGSMWYSFAFTVQITFFTVIALQVKRVAPGAHTIVEIVKARFGQASHAVFLFYALGTNIIVSAMLLLGGSQAISAITGMHVVAAGFLLPLGVWLYTVSGGLKSTFLSDWTHTVIVYIVILITLFVAYTSSVHIGSIDKMYDLLTEVSKTNPSTGYKGSYLTVTNRDAVFVGWNIVIGGFATVFCDPSYGQKAIAAKPISAMKGYFAGGLAWLIVPWAMGSAAALSCLALTNNPVSVTYPDPVSSKQVSEGMPLLYGMTALMGKNGAAAGVLILFMASTSATSAELVAFSSVMTYDVYRNYFRPNASGKELVRVTHVFVTIFAVCMGALAVLFNYIGITISWIITFIGIALGPAVFGITLTLFWKKMNKYGMIIGCPMGSITGVVCWVGSCYKFSNGVVNKTTLNTPYANAVGNFTGLFSGLIYIVLISYFFPNKSDDLNNLNEKFVLGDDATAEEIVDAETEKKQLDRSLRIGIFVSWIIFFILVIIVPLPMYGSKYIFSKLFFRGWIIVIIIWTLIAALYITFYPLYESRDTIVYLCKLAIGKAKAPEPMNYVDAVEVEIESLSDDDKEKKANDFL.

15 consecutive transmembrane segments (helical) span residues 13–33 (GIVIGLGFAFAIVMILVTYVL), 56–76 (GLISSAVVSSWTWPGTLLTSA), 86–106 (GSMWYSFAFTVQITFFTVIAL), 132–152 (AVFLFYALGTNIIVSAMLLLG), 165–185 (VVAAGFLLPLGVWLYTVSGGL), 197–217 (VIVYIVILITLFVAYTSSVHI), 251–271 (AVFVGWNIVIGGFATVFCDPS), 288–308 (YFAGGLAWLIVPWAMGSAAAL), 352–372 (AGVLILFMASTSATSAELVAF), 397–417 (VTHVFVTIFAVCMGALAVLFN), 419–439 (IGITISWIITFIGIALGPAVF), 454–474 (GMIIGCPMGSITGVVCWVGSC), 495–515 (VGNFTGLFSGLIYIVLISYFF), 556–576 (IGIFVSWIIFFILVIIVPLPM), and 591–611 (WIIVIIIWTLIAALYITFYPL).

This sequence belongs to the sodium:solute symporter (SSF) (TC 2.A.21) family.

Its subcellular location is the membrane. It localises to the golgi apparatus membrane. Its function is as follows. Involved in active transport of urea. The protein is Probable urea active transporter 3 (dur3-3) of Schizosaccharomyces pombe (strain 972 / ATCC 24843) (Fission yeast).